A 362-amino-acid chain; its full sequence is S-adenosylmethionine decarboxylase proenzyme (362 aa).

Active-site residues include E11 and E14. S71 serves as the catalytic Schiff-base intermediate with substrate; via pyruvic acid. Position 71 is a pyruvic acid (Ser); by autocatalysis (S71). C85 (proton donor; for catalytic activity) is an active-site residue. Active-site proton acceptor; for processing activity residues include S234 and H247.

Belongs to the eukaryotic AdoMetDC family. Requires pyruvate as cofactor. Post-translationally, is synthesized initially as an inactive proenzyme. Formation of the active enzyme involves a self-maturation process in which the active site pyruvoyl group is generated from an internal serine residue via an autocatalytic post-translational modification. Two non-identical subunits are generated from the proenzyme in this reaction, and the pyruvate is formed at the N-terminus of the alpha chain, which is derived from the carboxyl end of the proenzyme. The post-translation cleavage follows an unusual pathway, termed non-hydrolytic serinolysis, in which the side chain hydroxyl group of the serine supplies its oxygen atom to form the C-terminus of the beta chain, while the remainder of the serine residue undergoes an oxidative deamination to produce ammonia and the pyruvoyl group blocking the N-terminus of the alpha chain.

The catalysed reaction is S-adenosyl-L-methionine + H(+) = S-adenosyl 3-(methylsulfanyl)propylamine + CO2. Its pathway is amine and polyamine biosynthesis; S-adenosylmethioninamine biosynthesis; S-adenosylmethioninamine from S-adenosyl-L-methionine: step 1/1. This is S-adenosylmethionine decarboxylase proenzyme (SAMDC) from Ipomoea batatas (Sweet potato).